Consider the following 224-residue polypeptide: Ribonuclease 3 (224 aa).

The 123-residue stretch at 5–127 (LERLCRRLNY…ILAAIYLDGG (123 aa)) folds into the RNase III domain. Glu40 contacts Mg(2+). Residue Asp44 is part of the active site. Mg(2+)-binding residues include Asp113 and Glu116. The active site involves Glu116. The 71-residue stretch at 154–224 (DAKTQLQEFL…AKAMLEQLQG (71 aa)) folds into the DRBM domain.

It belongs to the ribonuclease III family. As to quaternary structure, homodimer. Requires Mg(2+) as cofactor.

The protein localises to the cytoplasm. It catalyses the reaction Endonucleolytic cleavage to 5'-phosphomonoester.. In terms of biological role, digests double-stranded RNA. Involved in the processing of primary rRNA transcript to yield the immediate precursors to the large and small rRNAs (23S and 16S). Processes some mRNAs, and tRNAs when they are encoded in the rRNA operon. Processes pre-crRNA and tracrRNA of type II CRISPR loci if present in the organism. The chain is Ribonuclease 3 from Legionella pneumophila subsp. pneumophila (strain Philadelphia 1 / ATCC 33152 / DSM 7513).